Reading from the N-terminus, the 147-residue chain is Methylglyoxal synthase (147 aa).

The MGS-like domain maps to 1 to 147 (MKGQRNIGMV…TPYVKRLGAK (147 aa)). Substrate is bound by residues His-12, Lys-16, 38–41 (TGTT), and 59–60 (SG). The active-site Proton donor/acceptor is the Asp-65. His-92 provides a ligand contact to substrate.

Belongs to the methylglyoxal synthase family.

The catalysed reaction is dihydroxyacetone phosphate = methylglyoxal + phosphate. Catalyzes the formation of methylglyoxal from dihydroxyacetone phosphate. The chain is Methylglyoxal synthase from Oleidesulfovibrio alaskensis (strain ATCC BAA-1058 / DSM 17464 / G20) (Desulfovibrio alaskensis).